We begin with the raw amino-acid sequence, 253 residues long: Phycoerythrobilin:ferredoxin oxidoreductase (253 aa).

Belongs to the HY2 family.

The catalysed reaction is (3Z)-phycoerythrobilin + oxidized 2[4Fe-4S]-[ferredoxin] = 15,16-dihydrobiliverdin + reduced 2[4Fe-4S]-[ferredoxin] + 2 H(+). Functionally, catalyzes the two-electron reduction of the C2 and C3(1) diene system of 15,16-dihydrobiliverdin. This chain is Phycoerythrobilin:ferredoxin oxidoreductase (pebB), found in Prochlorococcus marinus (strain MIT 9215).